We begin with the raw amino-acid sequence, 1222 residues long: MLVGQGAGPLGPAVVTAAVVLLLSGVGPAHGSEDIVVGCGGFVKSDVEINYSLIEIKLYTKHGTLKYQTDCAPNNGYFMIPLYDKGDFILKIEPPLGWSFEPTTVELHVDGVSDICTKGGDINFVFTGFSVNGKVLSKGQPLGPAGVQVSLRNTGTEAKIQSTVTQPGGKFAFFKVLPGDYEILATHPTWALKEASTTVRVTNSNANAASPLIVAGYNVSGSVRSDGEPMKGVKFLLFSSLVTKEDVLGCNVSPVPGFQPQDESLVYLCYTVSREDGSFSFYSLPSGGYTVIPFYRGERITFDVAPSRLDFTVEHDSLKIEPVFHVMGFSVTGRVLNGPEGDGVPEAVVTLNNQIKVKTKADGSFRLENITTGTYTIHAQKEHLYFETVTIKIAPNTPQLADIVATGFSVCGQISIIRFPDTVKQMNKYKVVLSSQDKDKSLVTVETDAHGSFCFKANPGTYKVQVMVPEAETRAGLTLKPQTFPLTVTDRPVMDVAFVQFLASVSGKVSCLDTCGDLLVTLQSLSRQGEKRSLQLSGKVNAMTFTFDNVLPGKYKISIMHEDWCWKNKSLEVEVLEDDVSAVEFRQTGYMLRCSLSHAITLEFYQDGNGRENVGIYNLSKGVNRFCLSKPGVYKVTPRSCHRFEQAFYTYDTSSPSILTLTAIRHHVLGTITTDKMMDVTVTIKSSIDSEPALVLGPLKSVQELRREQQLAEIEARRQEREKNGNEEGEERMTKPPVQEMVDELQGPFSYDFSYWARSGEKITVTPSSKELLFYPPSMEAVVSGESCPGKLIEIHGKAGLFLEGQIHPELEGVEIVISEKGASSPLITVFTDDKGAYSVGPLHSDLEYTVTSQKEGYVLTAVEGTIGDFKAYALAGVSFEIKAEDDQPLPGVLLSLSGGLFRSNLLTQDNGILTFSNLSPGQYYFKPMMKEFRFEPSSQMIEVQEGQNLKITITGYRTAYSCYGTVSSLNGEPEQGVAMEAVGQNDCSIYGEDTVTDEEGKFRLRGLLPGCVYHVQLKAEGNDHIERALPHHRVIEVGNNDIDDVNIIVFRQINQFDLSGNVITSSEYLPTLWVKLYKSENLDNPIQTVSLGQSLFFHFPPLLRDGENYVVLLDSTLPRSQYDYILPQVSFTAVGYHKHITLIFNPTRKLPEQDIAQGSYIALPLTLLVLLAGYNHDKLIPLLLQLTSRLQGVGALGQAASDNSGPEDAKRQAKKQKTRRT.

A signal peptide spans 1–31 (MLVGQGAGPLGPAVVTAAVVLLLSGVGPAHG). Residues 32–1155 (SEDIVVGCGG…NPTRKLPEQD (1124 aa)) are Extracellular-facing. N-linked (GlcNAc...) asparagine glycans are attached at residues Asn50, Asn218, and Asn618. A helical membrane pass occupies residues 1156-1176 (IAQGSYIALPLTLLVLLAGYN). At 1177-1222 (HDKLIPLLLQLTSRLQGVGALGQAASDNSGPEDAKRQAKKQKTRRT) the chain is on the cytoplasmic side. The segment at 1198 to 1222 (GQAASDNSGPEDAKRQAKKQKTRRT) is disordered. Over residues 1213-1222 (QAKKQKTRRT) the composition is skewed to basic residues.

Component of the back of Sec61 (BOS) complex, composed of NCLN/Nicalin, NOMO (NOMO1, NOMO2 or NOMO3) and TMEM147. The BOS complex is part of the multi-pass translocon (MPT) complex, composed of three subcomplexes, the GEL complex (composed of RAB5IF/OPTI and TMCO1), the BOS complex (composed of NCLN/Nicalin, NOMO and TMEM147) and the PAT complex (composed of WDR83OS/Asterix and CCDC47). The MPT complex associates with the SEC61 complex. Due to the strong similarity between NOMO1, NOMO2 and NOMO3, similar interaction pattern probably occur for the three gene copies.

It is found in the endoplasmic reticulum membrane. Its function is as follows. Component of the multi-pass translocon (MPT) complex that mediates insertion of multi-pass membrane proteins into the lipid bilayer of membranes. The MPT complex takes over after the SEC61 complex: following membrane insertion of the first few transmembrane segments of proteins by the SEC61 complex, the MPT complex occludes the lateral gate of the SEC61 complex to promote insertion of subsequent transmembrane regions. This Homo sapiens (Human) protein is BOS complex subunit NOMO3 (NOMO3).